We begin with the raw amino-acid sequence, 419 residues long: Histidine--tRNA ligase (419 aa).

It belongs to the class-II aminoacyl-tRNA synthetase family.

The protein resides in the cytoplasm. The enzyme catalyses tRNA(His) + L-histidine + ATP = L-histidyl-tRNA(His) + AMP + diphosphate + H(+). In Pyrobaculum arsenaticum (strain DSM 13514 / JCM 11321 / PZ6), this protein is Histidine--tRNA ligase.